The sequence spans 465 residues: Cysteine--tRNA ligase (465 aa).

Cysteine 27 provides a ligand contact to Zn(2+). The 'HIGH' region motif lies at 29–39; sequence PTVYDDAHLGH. Zn(2+) contacts are provided by cysteine 207, histidine 237, and glutamate 241. The 'KMSKS' region signature appears at 269-273; that stretch reads KMSKS. Lysine 272 contacts ATP.

This sequence belongs to the class-I aminoacyl-tRNA synthetase family. As to quaternary structure, monomer. Requires Zn(2+) as cofactor.

The protein resides in the cytoplasm. It catalyses the reaction tRNA(Cys) + L-cysteine + ATP = L-cysteinyl-tRNA(Cys) + AMP + diphosphate. The chain is Cysteine--tRNA ligase from Helicobacter pylori (strain Shi470).